Reading from the N-terminus, the 93-residue chain is Large ribosomal subunit protein uL23cz/uL23cy (93 aa).

The protein belongs to the universal ribosomal protein uL23 family. In terms of assembly, part of the 50S ribosomal subunit.

It localises to the plastid. The protein resides in the chloroplast. Its function is as follows. Binds to 23S rRNA. The sequence is that of Large ribosomal subunit protein uL23cz/uL23cy (rpl23-A) from Phaseolus angularis (Azuki bean).